The sequence spans 2742 residues: Neurobeachin-like protein 2 (2742 aa).

Disordered stretches follow at residues 1312 to 1333 and 1356 to 1434; these read ALSPPPTELPADSSDVFLPSES and LERA…QQTP. Positions 1384–1394 are enriched in pro residues; that stretch reads TPSPLDGPRPF. Residues 1421–1433 show a composition bias toward polar residues; that stretch reads GDDTSNTSNPQQT. A Phosphothreonine modification is found at Thr1855. One can recognise a BEACH-type PH domain in the interval 1903-2028; sequence EKREKLVLSA…LRNQVYSLLL (126 aa). One can recognise a BEACH domain in the interval 2041 to 2333; it reads RSPLEMLRAS…QLLKEPHPPR (293 aa). 7 WD repeats span residues 2374 to 2412, 2436 to 2479, 2482 to 2519, 2532 to 2570, 2577 to 2619, 2627 to 2662, and 2670 to 2705; these read LVLALVPHRQSHSFITQSSSDMLVTVSASGLLGTHTWLP, KLLS…SLPR, LLNQLSRHLDIVTCLALDTCGIYLISGSRDTTCMVWRL, KPVQVLYGHVAAVSCVAISTELDMAVSGSEDGTVIIHTV, AALR…TYSL, RLRASVTLTEQPTALTVAEDFVLLGTAQCSLHILHL, and PPLPMKVPVHSVSVTKERSHVLVGLEDGKLIVVGAG. Phosphoserine occurs at positions 2727 and 2730.

The protein belongs to the WD repeat neurobeachin family.

It localises to the endoplasmic reticulum. In terms of biological role, probably involved in thrombopoiesis. Plays a role in the development or secretion of alpha-granules, that contain several growth factors important for platelet biogenesis. This chain is Neurobeachin-like protein 2 (Nbeal2), found in Mus musculus (Mouse).